A 215-amino-acid polypeptide reads, in one-letter code: tRNA (guanine-N(7)-)-methyltransferase (215 aa).

S-adenosyl-L-methionine is bound by residues E44, E69, D96, and D118. D118 is a catalytic residue. Residues K122, D154, and 192 to 195 (TEYE) each bind substrate.

The protein belongs to the class I-like SAM-binding methyltransferase superfamily. TrmB family.

The catalysed reaction is guanosine(46) in tRNA + S-adenosyl-L-methionine = N(7)-methylguanosine(46) in tRNA + S-adenosyl-L-homocysteine. Its pathway is tRNA modification; N(7)-methylguanine-tRNA biosynthesis. Catalyzes the formation of N(7)-methylguanine at position 46 (m7G46) in tRNA. The sequence is that of tRNA (guanine-N(7)-)-methyltransferase from Levilactobacillus brevis (strain ATCC 367 / BCRC 12310 / CIP 105137 / JCM 1170 / LMG 11437 / NCIMB 947 / NCTC 947) (Lactobacillus brevis).